Reading from the N-terminus, the 286-residue chain is MTATILDGKATRDEIFEDLKVRVSALKDRGITPGLGTVLVGDDPGSAAYVRGKHNDCAKVGITSIRRDLPGDITQEKLDATIDELNANPDCTGYIVQLPLPKQLDENAALERIDPDKDADGLHPVNLGRLVLGKKAPLPCTPRGILHLLRRYEVPIEGAHVVVVGRGVTVGRPIGLLFTRRSENATVTLCHTRTRDLGAEVRRADIVIAAAGVPGLITADMVKPGAAVLDVGVSRTADGLRGDVAADVAEVAGFLSPNPGGVGPLTRAFLLTNVVERAERVAASLG.

NADP(+) is bound by residues 165–167, Thr192, and Val233; that span reads GRG.

This sequence belongs to the tetrahydrofolate dehydrogenase/cyclohydrolase family. In terms of assembly, homodimer.

It catalyses the reaction (6R)-5,10-methylene-5,6,7,8-tetrahydrofolate + NADP(+) = (6R)-5,10-methenyltetrahydrofolate + NADPH. The enzyme catalyses (6R)-5,10-methenyltetrahydrofolate + H2O = (6R)-10-formyltetrahydrofolate + H(+). Its pathway is one-carbon metabolism; tetrahydrofolate interconversion. Catalyzes the oxidation of 5,10-methylenetetrahydrofolate to 5,10-methenyltetrahydrofolate and then the hydrolysis of 5,10-methenyltetrahydrofolate to 10-formyltetrahydrofolate. In Rhodococcus jostii (strain RHA1), this protein is Bifunctional protein FolD 2.